A 356-amino-acid polypeptide reads, in one-letter code: D-alanine--D-alanine ligase (356 aa).

In terms of domain architecture, ATP-grasp spans 146-350 (KKLLVAEGLP…YAELLDTLIQ (205 aa)). 173-228 (KERLGLPVFVKPARGGSSIGVSKVSAWEDLEAALTLAYESDDKVLIEPEISGAEVE) contacts ATP. Mg(2+) is bound by residues Asp-305, Glu-317, and Asn-319.

This sequence belongs to the D-alanine--D-alanine ligase family. Requires Mg(2+) as cofactor. It depends on Mn(2+) as a cofactor.

The protein localises to the cytoplasm. It catalyses the reaction 2 D-alanine + ATP = D-alanyl-D-alanine + ADP + phosphate + H(+). Its pathway is cell wall biogenesis; peptidoglycan biosynthesis. In terms of biological role, cell wall formation. The protein is D-alanine--D-alanine ligase of Corynebacterium aurimucosum (strain ATCC 700975 / DSM 44827 / CIP 107346 / CN-1) (Corynebacterium nigricans).